Reading from the N-terminus, the 166-residue chain is Heme-degrading monooxygenase HmoB (166 aa).

Asparagine 33 is a binding site for Fe cation. An ABM domain is found at 66 to 153; the sequence is FAVLNNIAVT…SAGIDTTSIF (88 aa). Heme is bound at residue histidine 138.

It belongs to the antibiotic biosynthesis monooxygenase family. As to quaternary structure, homodimer.

It is found in the cytoplasm. It carries out the reaction heme b + 3 reduced [NADPH--hemoprotein reductase] + 3 O2 = biliverdin IXalpha + CO + Fe(2+) + 3 oxidized [NADPH--hemoprotein reductase] + 3 H2O + H(+). Its function is as follows. Catalyzes the oxidative degradation of the heme macrocyclic porphyrin ring in the presence of a suitable electron donor such as ascorbate or NADPH--cytochrome P450 reductase, with subsequent release of free iron. This is Heme-degrading monooxygenase HmoB (hmoB) from Bacillus subtilis (strain 168).